An 89-amino-acid polypeptide reads, in one-letter code: Small ribosomal subunit protein uS15 (89 aa).

The protein belongs to the universal ribosomal protein uS15 family. As to quaternary structure, part of the 30S ribosomal subunit. Forms a bridge to the 50S subunit in the 70S ribosome, contacting the 23S rRNA.

Functionally, one of the primary rRNA binding proteins, it binds directly to 16S rRNA where it helps nucleate assembly of the platform of the 30S subunit by binding and bridging several RNA helices of the 16S rRNA. Forms an intersubunit bridge (bridge B4) with the 23S rRNA of the 50S subunit in the ribosome. The chain is Small ribosomal subunit protein uS15 from Synechocystis sp. (strain ATCC 27184 / PCC 6803 / Kazusa).